Here is a 171-residue protein sequence, read N- to C-terminus: UPF0312 protein MW2606 (171 aa).

Belongs to the UPF0312 family.

In Staphylococcus aureus (strain MW2), this protein is UPF0312 protein MW2606.